The chain runs to 604 residues: Glutamine--fructose-6-phosphate aminotransferase [isomerizing] (604 aa).

Residue Cys2 is the Nucleophile; for GATase activity of the active site. In terms of domain architecture, Glutamine amidotransferase type-2 spans Cys2–Asp218. SIS domains follow at residues Ile284–Lys423 and Val456–Pro594. Lys599 functions as the For Fru-6P isomerization activity in the catalytic mechanism.

In terms of assembly, homodimer.

The protein resides in the cytoplasm. The catalysed reaction is D-fructose 6-phosphate + L-glutamine = D-glucosamine 6-phosphate + L-glutamate. Catalyzes the first step in hexosamine metabolism, converting fructose-6P into glucosamine-6P using glutamine as a nitrogen source. In Streptococcus pyogenes serotype M6 (strain ATCC BAA-946 / MGAS10394), this protein is Glutamine--fructose-6-phosphate aminotransferase [isomerizing].